A 488-amino-acid polypeptide reads, in one-letter code: Histamine H1 receptor (488 aa).

At 1–38 (MSFLPGMTPVTLSNFSWALEDRMLEGNSTTTPTRQLMP) the chain is on the extracellular side. N-linked (GlcNAc...) asparagine glycans are attached at residues asparagine 14 and asparagine 27. The chain crosses the membrane as a helical span at residues 39 to 59 (LVVVLSSVSLVTVALNLLVLY). Over 60 to 73 (AVRSERKLHTVGNL) the chain is Cytoplasmic. The chain crosses the membrane as a helical span at residues 74-98 (YIVSLSVADLIVGAVVMPMSILYLH). Residues 99–106 (RSAWILGR) are Extracellular-facing. A helical transmembrane segment spans residues 107–132 (PLCLFWLSMDYVASTASIFSVFILCI). An intrachain disulfide couples cysteine 109 to cysteine 189. The histamine site is built by aspartate 116 and threonine 121. The tract at residues 116–121 (DYVAST) is important for agonist binding. Topologically, residues 133-153 (DRYRSVQQPLRYLRYRTKTRA) are cytoplasmic. Phosphothreonine is present on residues threonine 149 and threonine 151. A helical membrane pass occupies residues 154–173 (SATILGAWLLSFLWVIPILG). The Extracellular segment spans residues 174–197 (WHHFMAPTSEPREKKCETDFYDVT). The chain crosses the membrane as a helical span at residues 198-220 (WFKVMTAIINFYLPTLLMLWFYI). Histamine is bound at residue asparagine 207. Over 221–417 (RIYKAVRRHC…LNRERKAAKQ (197 aa)) the chain is Cytoplasmic. Residue serine 239 is modified to Phosphoserine. The segment covering 259 to 274 (RMGKESPWEDPKRCSK) has biased composition (basic and acidic residues). The tract at residues 259 to 285 (RMGKESPWEDPKRCSKDASGVHTPMPS) is disordered. 5 positions are modified to phosphoserine: serine 345, serine 381, serine 383, serine 397, and serine 399. A helical transmembrane segment spans residues 418-441 (LGCIMAAFILCWIPYFVFFMVIAF). An important for agonist binding region spans residues 425 to 429 (FILCW). Tyrosine 432 contributes to the histamine binding site. Cysteine 442 and cysteine 445 are oxidised to a cystine. Over 442 to 447 (CKSCSN) the chain is Extracellular. The chain crosses the membrane as a helical span at residues 448–470 (EPVHMFTIWLGYLNSTLNPLIYP). Residues 471-488 (LCNENFRKTFKRILRIPP) are Cytoplasmic-facing.

Belongs to the G-protein coupled receptor 1 family. Phosphorylation at sites in the second and third cytoplasmic loops independently contribute to agonist-induced receptor down-regulation.

The protein localises to the cell membrane. G-protein-coupled receptor for histamine, a biogenic amine that functions as an immune modulator and a neurotransmitter. Through the H1 receptor, histamine mediates the contraction of smooth muscles and increases capillary permeability due to contraction of terminal venules. Also mediates neurotransmission in the central nervous system and thereby regulates circadian rhythms, emotional and locomotor activities as well as cognitive functions. This Cavia porcellus (Guinea pig) protein is Histamine H1 receptor.